The sequence spans 715 residues: Serrate RNA effector molecule homolog (715 aa).

Disordered stretches follow at residues 1 to 87, 223 to 259, and 629 to 715; these read MDSD…YSGP, ENKD…TDKA, and EPKH…DDIP. Composition is skewed to basic and acidic residues over residues 7-25, 37-57, and 223-242; these read GDRR…DSYR, YDNK…SRGD, and ENKD…VKEE. Residues 243-256 show a composition bias toward acidic residues; sequence PNEEQEEGAIDDET. Basic and acidic residues predominate over residues 629 to 659; it reads EPKHMPHMSRDDHRGGGGDRGYGRERDDDRG.

The protein belongs to the ARS2 family.

It is found in the nucleus. Its function is as follows. Acts as a mediator between the cap-binding complex (CBC) and the primary microRNAs (miRNAs) processing machinery. Contributes to the stability and delivery of capped primary miRNA transcripts to the primary miRNA processing complex, thereby playing a role in RNA-mediated gene silencing (RNAi) by miRNAs. The sequence is that of Serrate RNA effector molecule homolog from Caenorhabditis briggsae.